A 259-amino-acid polypeptide reads, in one-letter code: Small ribosomal subunit protein mS23 (259 aa).

Over residues 230–244 the composition is skewed to polar residues; sequence RAASFTGSALPSSEE. Residues 230–259 form a disordered region; the sequence is RAASFTGSALPSSEESAPVDEETEKVPQQV.

The protein belongs to the mitochondrion-specific ribosomal protein mS23 family. As to quaternary structure, component of the mitochondrial small ribosomal subunit.

Its subcellular location is the mitochondrion. In Aspergillus terreus (strain NIH 2624 / FGSC A1156), this protein is Small ribosomal subunit protein mS23 (rsm25).